The chain runs to 201 residues: Urease accessory protein UreG (201 aa).

11–18 lines the GTP pocket; it reads GPVGSGKT.

Belongs to the SIMIBI class G3E GTPase family. UreG subfamily. As to quaternary structure, homodimer. UreD, UreF and UreG form a complex that acts as a GTP-hydrolysis-dependent molecular chaperone, activating the urease apoprotein by helping to assemble the nickel containing metallocenter of UreC. The UreE protein probably delivers the nickel.

It is found in the cytoplasm. Its function is as follows. Facilitates the functional incorporation of the urease nickel metallocenter. This process requires GTP hydrolysis, probably effectuated by UreG. This Synechococcus sp. (strain CC9605) protein is Urease accessory protein UreG.